The primary structure comprises 209 residues: High frequency lysogenization protein HflD homolog (209 aa).

It belongs to the HflD family.

Its subcellular location is the cytoplasm. The protein resides in the cell inner membrane. This is High frequency lysogenization protein HflD homolog from Saccharophagus degradans (strain 2-40 / ATCC 43961 / DSM 17024).